Consider the following 74-residue polypeptide: Bacteriocin hiracin-JM79 (74 aa).

The N-terminal stretch at 1–30 (MKKKVLKHCVILGILGTCLAGIGTGIKVDA) is a signal peptide.

The protein resides in the secreted. Bacteriocin with antibacterial activity against the Gram-positive Listeria, Enterococcus, Propionibacterium, Staphylococcus and some strains of Clostridium, Lactobacillus and Pediococcus. Lacks antibacterial activity against Gram-negative bacteria. The protein is Bacteriocin hiracin-JM79 of Enterococcus hirae.